The chain runs to 196 residues: Pyridoxal 5'-phosphate synthase subunit PdxT (196 aa).

L-glutamine is bound at residue Gly47–Ser49. The active-site Nucleophile is Cys79. Residues Arg106 and Ile134–Arg135 each bind L-glutamine. Catalysis depends on charge relay system residues His170 and Glu172.

Belongs to the glutaminase PdxT/SNO family. As to quaternary structure, in the presence of PdxS, forms a dodecamer of heterodimers. Only shows activity in the heterodimer.

The catalysed reaction is aldehydo-D-ribose 5-phosphate + D-glyceraldehyde 3-phosphate + L-glutamine = pyridoxal 5'-phosphate + L-glutamate + phosphate + 3 H2O + H(+). It carries out the reaction L-glutamine + H2O = L-glutamate + NH4(+). Its pathway is cofactor biosynthesis; pyridoxal 5'-phosphate biosynthesis. In terms of biological role, catalyzes the hydrolysis of glutamine to glutamate and ammonia as part of the biosynthesis of pyridoxal 5'-phosphate. The resulting ammonia molecule is channeled to the active site of PdxS. The chain is Pyridoxal 5'-phosphate synthase subunit PdxT from Bacillus pumilus (strain SAFR-032).